The chain runs to 248 residues: Ribosomal RNA small subunit methyltransferase J (248 aa).

Residues 98–99 (RD), 114–115 (ER), 150–151 (SS), and aspartate 168 contribute to the S-adenosyl-L-methionine site.

It belongs to the methyltransferase superfamily. RsmJ family.

Its subcellular location is the cytoplasm. The enzyme catalyses guanosine(1516) in 16S rRNA + S-adenosyl-L-methionine = N(2)-methylguanosine(1516) in 16S rRNA + S-adenosyl-L-homocysteine + H(+). Specifically methylates the guanosine in position 1516 of 16S rRNA. This chain is Ribosomal RNA small subunit methyltransferase J, found in Shewanella baltica (strain OS223).